The following is a 304-amino-acid chain: tRNA dimethylallyltransferase (304 aa).

2–9 (GPTASGKT) is an ATP binding site. Residue 4 to 9 (TASGKT) participates in substrate binding. Interaction with substrate tRNA regions lie at residues 27 to 30 (DSAL), 151 to 155 (QRINR), 232 to 237 (RCVGYR), and 265 to 272 (KRQITWLR).

The protein belongs to the IPP transferase family. In terms of assembly, monomer. It depends on Mg(2+) as a cofactor.

It catalyses the reaction adenosine(37) in tRNA + dimethylallyl diphosphate = N(6)-dimethylallyladenosine(37) in tRNA + diphosphate. Functionally, catalyzes the transfer of a dimethylallyl group onto the adenine at position 37 in tRNAs that read codons beginning with uridine, leading to the formation of N6-(dimethylallyl)adenosine (i(6)A). The sequence is that of tRNA dimethylallyltransferase from Actinobacillus pleuropneumoniae serotype 5b (strain L20).